The chain runs to 372 residues: GDP-mannose 4,6-dehydratase (372 aa).

NADP(+) is bound by residues 8–13 (GITGQD), 63–64 (DL), 85–89 (LGAQS), and Tyr-100. The active site involves Thr-132. Catalysis depends on nucleophile residues Glu-134 and Tyr-156. 3 residues coordinate NADP(+): Lys-160, His-186, and Arg-191.

It belongs to the NAD(P)-dependent epimerase/dehydratase family. GDP-mannose 4,6-dehydratase subfamily. Requires NADP(+) as cofactor.

The catalysed reaction is GDP-alpha-D-mannose = GDP-4-dehydro-alpha-D-rhamnose + H2O. The protein operates within bacterial outer membrane biogenesis; LPS O-antigen biosynthesis. It functions in the pathway nucleotide-sugar biosynthesis; GDP-L-fucose biosynthesis via de novo pathway; GDP-L-fucose from GDP-alpha-D-mannose: step 1/2. Functionally, catalyzes the conversion of GDP-D-mannose to GDP-4-dehydro-6-deoxy-D-mannose. This is GDP-mannose 4,6-dehydratase from Yersinia enterocolitica serotype O:8 / biotype 1B (strain NCTC 13174 / 8081).